Here is an 868-residue protein sequence, read N- to C-terminus: Programmed cell death 6-interacting protein (868 aa).

The residue at position 2 (A2) is an N-acetylalanine. One can recognise a BRO1 domain in the interval 3–392; sequence TFISVQLKKT…AQMREATTLA (390 aa). Residues 176–503 form an interaction with CHMP4A, CHMP4B and CHMP4C region; that stretch reads TVDISPDTVG…NFRTVLDKAV (328 aa). The interaction with EIAV p9 stretch occupies residues 176–868; it reads TVDISPDTVG…PPQQSYYPQQ (693 aa). The residue at position 215 (K215) is an N6-acetyllysine. An interaction with SDCBP region spans residues 418–868; it reads LTKSRSVIEQ…PPQQSYYPQQ (451 aa). T479 bears the Phosphothreonine mark. S481 bears the Phosphoserine mark. Positions 503–868 are self-association; it reads VQADGQVKEC…PPQQSYYPQQ (366 aa). Disordered stretches follow at residues 713–809 and 832–868; these read IARE…YPGY and PYPPVYHQSPGQAPYPGPQQPSYPFPQPPQQSYYPQQ. Residues 717–720 are interaction with TSG101; that stretch reads PSAP. S730 carries the phosphoserine modification. Pro residues predominate over residues 737 to 763; that stretch reads PTPPTPAPRTMPPTKPQPPARPPPPVL. Phosphothreonine occurs at positions 738 and 741. R745 bears the Omega-N-methylarginine mark. Over residues 778 to 791 the composition is skewed to low complexity; that stretch reads GAGTAAPAPSQTPG. Pro residues-rich tracts occupy residues 792-807 and 844-860; these read SAPPPQAQGPPYPTYP and APYPGPQQPSYPFPQPP. An interaction with CEP55 region spans residues 801-806; the sequence is PPYPTY. Positions 864 to 868 are essential to promote virus budding; the sequence is YYPQQ.

Self-associates. Interacts with SH3KBP1/CIN85. Interacts with PDCD6 in a calcium -dependent manner. Interacts with TSG101 in a calcium-dependent manner; PDCD6IP homooligomerization may be required for TSG101-binding. Interacts with SGSM3. Directly interacts with CHMP4A, CHMP4B and CHMP4C. Directly interacts with CEP55 in a 1:2 stoechiometry. The interaction with CEP55 is required for PDCD6IP targeting to the midbody. May interact with PDGFRB. Interacts with SH3GL1 and SH3GL2/endophilin-1. Forms a complex with SDCBP and SDC2. Found in a complex with F-actin, TJP1/ZO-1 and PARD3. Interacts with CD2AP. Interacts with ARRDC1. Interacts (via BRO1 domain) with the ATG12-ATG3 conjugate; this interaction is bridged by ATG12 and promotes multiple PDCD6IP-mediated functions such as endolysosomal trafficking, macroautophagy and exosome biogenesis. As to quaternary structure, (Microbial infection) Interacts with HIV-1 p6. Interacts with HIV-1 p9. In terms of assembly, (Microbial infection) Interacts with EIAV p9. (Microbial infection) Interacts with Murine leukemia virus Gag polyprotein (via LYPX(n)L motif). As to quaternary structure, (Microbial infection) Interacts with ebola virus protein VP40 (via YPx(n)L/I motif). In terms of processing, may be phosphorylated on tyrosine residues by activated PDGFRB.

The protein localises to the cytoplasm. It is found in the cytosol. Its subcellular location is the melanosome. It localises to the cytoskeleton. The protein resides in the microtubule organizing center. The protein localises to the centrosome. It is found in the secreted. Its subcellular location is the extracellular exosome. It localises to the cell junction. The protein resides in the tight junction. The protein localises to the midbody. It is found in the midbody ring. Its function is as follows. Multifunctional protein involved in endocytosis, multivesicular body biogenesis, membrane repair, cytokinesis, apoptosis and maintenance of tight junction integrity. Class E VPS protein involved in concentration and sorting of cargo proteins of the multivesicular body (MVB) for incorporation into intralumenal vesicles (ILVs) that are generated by invagination and scission from the limiting membrane of the endosome. Binds to the phospholipid lysobisphosphatidic acid (LBPA) which is abundant in MVBs internal membranes. The MVB pathway requires the sequential function of ESCRT-O, -I,-II and -III complexes. The ESCRT machinery also functions in topologically equivalent membrane fission events, such as the terminal stages of cytokinesis. Adapter for a subset of ESCRT-III proteins, such as CHMP4, to function at distinct membranes. Required for completion of cytokinesis. May play a role in the regulation of both apoptosis and cell proliferation. Regulates exosome biogenesis in concert with SDC1/4 and SDCBP. By interacting with F-actin, PARD3 and TJP1 secures the proper assembly and positioning of actomyosin-tight junction complex at the apical sides of adjacent epithelial cells that defines a spatial membrane domain essential for the maintenance of epithelial cell polarity and barrier. In terms of biological role, (Microbial infection) Involved in HIV-1 virus budding. Can replace TSG101 it its role of supporting HIV-1 release; this function requires the interaction with CHMP4B. The ESCRT machinery also functions in topologically equivalent membrane fission events, such as enveloped virus budding (HIV-1 and other lentiviruses). This chain is Programmed cell death 6-interacting protein, found in Homo sapiens (Human).